The primary structure comprises 418 residues: MRRLFLPLGLAVAFLSPNFAVAQSDTGTSMVPVFPREAAGPLTLEAALSLAAGSNFNLSAAAKELDSTEGGIMQARVIPNPELKTLVEDTRKSTRTSTAQMNIPIELGGKRSARINAAERTRELAQATLAGVRGDIRAQVIESFFSVLIAQERVKLATGSADIAARGAQAASRRVAAGKISPVDETKARVEQANAELELAEATASLQSARQALTALWGNASPQFAEAQGNLDALPSRPAPELLQKELENSPLVAASRAELDRRQALVGVERSRQYPDLTVSLGAKRDTEANRNMAVIGVAIPLPIFDRNQGNLYSAIRQADKAQDEYLANRISLTRNLLMASNQLSVSRASAQTLKQTVLPGAEQAFNAATIGFEAGKFNYLDVLDAQRTLFQARIRYLGVLGQTYQAATTIDRILGR.

Residues 1 to 22 (MRRLFLPLGLAVAFLSPNFAVA) form the signal peptide.

It belongs to the outer membrane factor (OMF) (TC 1.B.17) family.

Its subcellular location is the cell outer membrane. In terms of biological role, czcC protein appears to modify the specificity of the system, perhaps by acting on the CzcB protein. When the CzcC protein is added to CzcA and CzcB, the efflux system gains specificity for cadmium and cobalt. The polypeptide is Cobalt-zinc-cadmium resistance protein CzcC (czcC) (Cupriavidus metallidurans (strain ATCC 43123 / DSM 2839 / NBRC 102507 / CH34) (Ralstonia metallidurans)).